The chain runs to 203 residues: MSKASSFVREYKLVMVGGGGVGKSALTIQFIQSHFVDEYDPTIEDSYRKQCVIDSETALLDVLDTAGQEEYSAMREQYMRNGEGFLLVYSITSRLSFEEITTFYQQICRVKDRDYFPMVLVGNKCDLEGDRQVSSQEGRDLAKNFGCQFIETSAKQRINVDEAFFEVVRDIRRYNKEQETRGHDQFGIQDAPDVASDKCCILM.

Residue 17-24 participates in GTP binding; the sequence is GGGGVGKS. The Effector region motif lies at 39–47; that stretch reads YDPTIEDSY. GTP-binding positions include 64-68 and 123-126; these read DTAGQ and NKCD. Residue Cys200 is modified to Cysteine methyl ester. Cys200 is lipidated: S-farnesyl cysteine. Positions 201-203 are cleaved as a propeptide — removed in mature form; sequence ILM.

It belongs to the small GTPase superfamily. Ras family.

It is found in the cell membrane. It carries out the reaction GTP + H2O = GDP + phosphate + H(+). Its activity is regulated as follows. Alternates between an inactive form bound to GDP and an active form bound to GTP. Activated by a guanine nucleotide-exchange factor (GEF) and inactivated by a GTPase-activating protein (GAP). This chain is Ras-like protein 1 (RAS1), found in Mucor circinelloides f. lusitanicus (Mucor racemosus var. lusitanicus).